A 306-amino-acid polypeptide reads, in one-letter code: D-aminoacyl-tRNA deacylase (306 aa).

The protein belongs to the DtdA deacylase family. In terms of assembly, monomer. Zn(2+) serves as cofactor.

The catalysed reaction is a D-aminoacyl-tRNA + H2O = a tRNA + a D-alpha-amino acid + H(+). It catalyses the reaction glycyl-tRNA(Ala) + H2O = tRNA(Ala) + glycine + H(+). Its function is as follows. D-aminoacyl-tRNA deacylase with broad substrate specificity. By recycling D-aminoacyl-tRNA to D-amino acids and free tRNA molecules, this enzyme counteracts the toxicity associated with the formation of D-aminoacyl-tRNA entities in vivo. The protein is D-aminoacyl-tRNA deacylase of Methanosarcina barkeri (strain Fusaro / DSM 804).